The sequence spans 84 residues: LYR motif-containing protein 4B (84 aa).

It belongs to the complex I LYR family.

This chain is LYR motif-containing protein 4B (lyrm4b), found in Salmo salar (Atlantic salmon).